The primary structure comprises 363 residues: MFSPTSKITTAQATIIIINYMLAAGVLTLPRTVTEQTQSPDGWISVLLGGVLAVIAGMIIAKLSQQYPKETFYEYSRHIVGKWLGHLISIVFITYFLALGAFEVRVMSEIVDFFLLEGTPSWAIIMTVLWIGLYSITQGLDPIARLFEMIFPITVIIFLTIALMSLGIFEINNLRPVLGDGIMPVLRGVKTTNLSFTCSEIMFILVAFMKKPKNAVKAVVIGTGVVTSFYMITMIMVIGALSVEGVVTRTWPGLDLMRSFEIPGLIFERFESFLLVIWIMQLFATFIITFYAASLGVSQVFKKKPLSCMFGLLPVIYILSCMPKNENDVFILGDTVSHIALYIFGALPILLLVISKWRKRGEK.

10 helical membrane passes run 8–28 (ITTA…GVLT), 41–61 (DGWI…MIIA), 84–104 (LGHL…AFEV), 113–133 (FFLL…WIGL), 149–169 (MIFP…LGIF), 189–209 (VKTT…VAFM), 218–238 (AVVI…IMVI), 273–293 (FLLV…FYAA), 305–325 (PLSC…MPKN), and 335–355 (TVSH…LVIS).

This sequence belongs to the amino acid-polyamine-organocation (APC) superfamily. Spore germination protein (SGP) (TC 2.A.3.9) family.

The protein resides in the cell membrane. Its function is as follows. Involved in the germinative response to L-alanine. Could be an amino acid transporter. The sequence is that of Spore germination protein YndE (yndE) from Bacillus subtilis (strain 168).